Consider the following 367-residue polypeptide: 2-aminoethylphosphonate--pyruvate transaminase (367 aa).

At Lys194 the chain carries N6-(pyridoxal phosphate)lysine.

It belongs to the class-V pyridoxal-phosphate-dependent aminotransferase family. PhnW subfamily. As to quaternary structure, homodimer. It depends on pyridoxal 5'-phosphate as a cofactor.

It carries out the reaction (2-aminoethyl)phosphonate + pyruvate = phosphonoacetaldehyde + L-alanine. Functionally, involved in phosphonate degradation. This Klebsiella pneumoniae subsp. pneumoniae (strain ATCC 700721 / MGH 78578) protein is 2-aminoethylphosphonate--pyruvate transaminase.